The chain runs to 444 residues: Forkhead box protein F2 (444 aa).

Residues P32–P98 are disordered. Low complexity predominate over residues A34–S75. Residues A76–G87 show a composition bias toward gly residues. Positions E99–R190 form a DNA-binding region, fork-head. 2 disordered regions span residues G256–M323 and A338–L367. Over residues A263–P274 the composition is skewed to basic residues. Gly residues predominate over residues G293–Y308. The span at G309–M323 shows a compositional bias: low complexity.

Interacts with the transcription factors TBP and TFIIB. Lung and placenta. Predominantly expressed in gastrointestinal tract including stomach.

The protein localises to the nucleus. Probable transcription activator for a number of lung-specific genes. Mediates up-regulation of the E3 ligase IRF2BPL and drives ubiquitination and degradation of CTNNB1. This Homo sapiens (Human) protein is Forkhead box protein F2 (FOXF2).